The chain runs to 250 residues: Triosephosphate isomerase (250 aa).

Residue 9-11 (NWK) coordinates substrate. His-94 functions as the Electrophile in the catalytic mechanism. Residue Glu-165 is the Proton acceptor of the active site. Residues Gly-171, Ser-211, and 232–233 (GG) each bind substrate.

The protein belongs to the triosephosphate isomerase family. Homodimer.

It is found in the cytoplasm. The enzyme catalyses D-glyceraldehyde 3-phosphate = dihydroxyacetone phosphate. It functions in the pathway carbohydrate biosynthesis; gluconeogenesis. Its pathway is carbohydrate degradation; glycolysis; D-glyceraldehyde 3-phosphate from glycerone phosphate: step 1/1. Involved in the gluconeogenesis. Catalyzes stereospecifically the conversion of dihydroxyacetone phosphate (DHAP) to D-glyceraldehyde-3-phosphate (G3P). This Alkalilimnicola ehrlichii (strain ATCC BAA-1101 / DSM 17681 / MLHE-1) protein is Triosephosphate isomerase.